The primary structure comprises 636 residues: DNA ligase (636 aa).

K113 acts as the N6-AMP-lysine intermediate in catalysis. A BRCT domain is found at 560–636 (NSEGIFQNQT…KSSFSKKFEK (77 aa)).

This sequence belongs to the NAD-dependent DNA ligase family.

The enzyme catalyses NAD(+) + (deoxyribonucleotide)n-3'-hydroxyl + 5'-phospho-(deoxyribonucleotide)m = (deoxyribonucleotide)n+m + AMP + beta-nicotinamide D-nucleotide.. In terms of biological role, catalyzes the formation of phosphodiester linkages between 5'-phosphoryl and 3'-hydroxyl groups in double-stranded DNA using NAD as a coenzyme and as the energy source for the reaction. The protein is DNA ligase of Acanthamoeba polyphaga (Amoeba).